A 418-amino-acid polypeptide reads, in one-letter code: Voltage-gated ClC-type chloride channel ClcB (418 aa).

Position 1 (Met1) is a topological domain, cytoplasmic. A helical membrane pass occupies residues 2 to 22; sequence FHRLLIATVVGILAAFAVAGF. Topologically, residues 23–53 are periplasmic; the sequence is RHAMLLLEWLFLNNDSGSLVNAATNLSPWRR. A helical transmembrane segment spans residues 54 to 74; it reads LLTPALGGLAAGLLLMGWQKF. The Cytoplasmic portion of the chain corresponds to 75–145; the sequence is TQQRPHAPTD…QRFTPRQEWK (71 aa). Residues 146–166 traverse the membrane as a helical segment; the sequence is LWIACGAAAGMAAAYRAPLAG. The Periplasmic segment spans residues 167–177; sequence SLFIAEVLFGT. Residues 178 to 200 form a helical membrane-spanning segment; that stretch reads MMLASLGPVIISAVVALLVSNLI. Residues 201-221 are Cytoplasmic-facing; the sequence is NHSDALLYNVQLSVTVQARDY. A helical transmembrane segment spans residues 222–242; sequence ALIISTGVLAGLCGPLLLTLM. The Periplasmic portion of the chain corresponds to 243–257; the sequence is NACHRGFVSLKLAPP. The helical transmembrane segment at 258 to 278 threads the bilayer; the sequence is WQLALGGLIVGLLSLFTPAVW. The Cytoplasmic portion of the chain corresponds to 279–290; it reads GNGYSTVQSFLT. The helical transmembrane segment at 291–311 threads the bilayer; that stretch reads APPLLMIIAGIFLCKLCAVLA. Over 312–315 the chain is Periplasmic; the sequence is SSGS. The helical transmembrane segment at 316 to 336 threads the bilayer; sequence GAPGGVFTPTLFIGLAIGMLY. Over 337–351 the chain is Cytoplasmic; it reads GRSLGLWFPDGEEIT. A helical membrane pass occupies residues 352 to 372; sequence LLLGLTGMATLLAATTHAPIM. Topologically, residues 373–379 are periplasmic; sequence STLMICE. The chain crosses the membrane as a helical span at residues 380–400; sequence MTGEYQLLPGLLIACVIASVI. Topologically, residues 401 to 418 are cytoplasmic; sequence SRTLHRDSIYRQHTAQHS.

This sequence belongs to the chloride channel (TC 2.A.49) family. ClcB subfamily.

It is found in the cell inner membrane. Functionally, probably acts as an electrical shunt for an outwardly-directed proton pump that is linked to amino acid decarboxylation, as part of the extreme acid resistance (XAR) response. This is Voltage-gated ClC-type chloride channel ClcB (clcB) from Escherichia coli (strain K12).